Reading from the N-terminus, the 223-residue chain is Ribose-5-phosphate isomerase A (223 aa).

Residues 32–35, 85–88, and 98–101 each bind substrate; these read TGST, DGAD, and KGGG. E107 acts as the Proton acceptor in catalysis. Residue K125 coordinates substrate.

This sequence belongs to the ribose 5-phosphate isomerase family. As to quaternary structure, homodimer.

It carries out the reaction aldehydo-D-ribose 5-phosphate = D-ribulose 5-phosphate. Its pathway is carbohydrate degradation; pentose phosphate pathway; D-ribose 5-phosphate from D-ribulose 5-phosphate (non-oxidative stage): step 1/1. Its function is as follows. Catalyzes the reversible conversion of ribose-5-phosphate to ribulose 5-phosphate. This chain is Ribose-5-phosphate isomerase A, found in Marinomonas sp. (strain MWYL1).